A 119-amino-acid chain; its full sequence is Ribonuclease P protein component (119 aa).

It belongs to the RnpA family. As to quaternary structure, consists of a catalytic RNA component (M1 or rnpB) and a protein subunit.

It carries out the reaction Endonucleolytic cleavage of RNA, removing 5'-extranucleotides from tRNA precursor.. Functionally, RNaseP catalyzes the removal of the 5'-leader sequence from pre-tRNA to produce the mature 5'-terminus. It can also cleave other RNA substrates such as 4.5S RNA. The protein component plays an auxiliary but essential role in vivo by binding to the 5'-leader sequence and broadening the substrate specificity of the ribozyme. The chain is Ribonuclease P protein component from Streptococcus equi subsp. zooepidemicus (strain MGCS10565).